The following is a 425-amino-acid chain: Actin-related protein 3 (425 aa).

Belongs to the actin family. ARP3 subfamily. In terms of assembly, component of the Arp2/3 complex, at least composed of arx-1, arx-2, arx-4 and arx-6.

The protein localises to the cytoplasm. Its subcellular location is the cytoskeleton. Its function is as follows. Functions as ATP-binding component of the Arp2/3 complex which is involved in regulation of actin polymerization and together with an activating nucleation-promoting factor (NPF) mediates the formation of branched actin networks. Seems to contact the pointed end of the daughter actin filament. Plays a role in time-dependent memory loss and the retention of conditioned behavior over time. This Caenorhabditis elegans protein is Actin-related protein 3.